The primary structure comprises 228 residues: PKHD-type hydroxylase Rmet_0838 (228 aa).

Residues R78–S179 enclose the Fe2OG dioxygenase domain. Fe cation is bound by residues H96, D98, and H160. R170 contacts 2-oxoglutarate.

It depends on Fe(2+) as a cofactor. L-ascorbate is required as a cofactor.

The chain is PKHD-type hydroxylase Rmet_0838 from Cupriavidus metallidurans (strain ATCC 43123 / DSM 2839 / NBRC 102507 / CH34) (Ralstonia metallidurans).